The following is a 401-amino-acid chain: MAAATVTVEEVRKAQRATGPATVLAIGTATPANCVHQADYPDYYFRITKSEHMTDLKEKFKRMCDKSQIRKRYMHLTEEYLAENPNMCAYMAPSLDARQDIVVVEVPKLGKAAAQKAIKEWGQPKSKITHLVFCTTSGVDMPGADYQLTKMLGLRPSVNRLMMYQQGCFAGGTVLRVAKDLAENNRGARVLVVCSEITAVTFRGPSESHLDSMVGQALFGDGAAAVIVGADPDERVERPLFQLVSASQTILPDSEGAIDGHLREVGLTFHLLKDVPGLISKNIERSLEEAFKPLGITDYNSIFWVAHPGGPAILDQVEAKVGLEKERLRATRHVLSEYGNMSSACVLFILDEMRKRSAEDGQATTGEGFDWGVLFGFGPGLTVETVVLHSVPITTGAAITA.

The active site involves Cys168.

It belongs to the thiolase-like superfamily. Chalcone/stilbene synthases family.

The catalysed reaction is (E)-4-coumaroyl-CoA + 3 malonyl-CoA + 3 H(+) = 2',4,4',6'-tetrahydroxychalcone + 3 CO2 + 4 CoA. It functions in the pathway secondary metabolite biosynthesis; flavonoid biosynthesis. Functionally, the primary product of this enzyme is 4,2',4',6'-tetrahydroxychalcone (also termed naringenin-chalcone or chalcone) which can under specific conditions spontaneously isomerize into naringenin. The protein is Chalcone synthase 3 (CHS3) of Sorghum bicolor (Sorghum).